A 446-amino-acid polypeptide reads, in one-letter code: Maltoporin (446 aa).

An N-terminal signal peptide occupies residues 1-25; it reads MMTTLRKLPLAVAVAAGMMSVQAMA.

Belongs to the porin LamB (TC 1.B.3) family. Homotrimer formed of three 18-stranded antiparallel beta-barrels, containing three independent channels.

It localises to the cell outer membrane. It carries out the reaction beta-maltose(in) = beta-maltose(out). Involved in the transport of maltose and maltodextrins. This chain is Maltoporin, found in Escherichia fergusonii (strain ATCC 35469 / DSM 13698 / CCUG 18766 / IAM 14443 / JCM 21226 / LMG 7866 / NBRC 102419 / NCTC 12128 / CDC 0568-73).